The chain runs to 507 residues: MLNADLKQQLQQLLELMEGDVEFVASLGSDDKSNELKELLNEIAEMSAHITITEKSLKRTPSFSVNRPGEETGITFAGIPLGHEFNSLVLAILQVSGRAPKEKQSIIDQIKGLEGPFHFETFVSLTCQKCPDVVQALNLMSVINPNITHTMIDGAVFREESENIMAVPAVFLDGQEFGNGRMTVQDILTKLGSTQDASEFNDKDPYDVLIVGGGPASGSAAIYTARKGLRTGIVADRIGGQVNDTAGIENFITVKETTGSEFSSNLAEHIAQYDIDTMTGIRATNIEKTDSAIRVTLENDAVLESKTVIISTGASWRKLNIPGEDRLINKGVAFCPHCDGPLFENKDVAVIGGGNSGVEAAIDLAGIVKHVTLFEYASELKADSVLQERLRSLPNVDIKTSAKTTEVIGDDYVTGISYEDMTTGESQVVNLDGIFVQIGLVPNTSWLQNAVELNERGEVMINRDNATNVPGIFAAGDVTDQKNKQIIISMGAGANAALNAFDYIIRN.

Position 207–222 (207–222 (DVLIVGGGPASGSAAI)) interacts with FAD. An intrachain disulfide couples cysteine 335 to cysteine 338. 347 to 361 (DVAVIGGGNSGVEAA) is a binding site for NAD(+). FAD is bound at residue 467–477 (TNVPGIFAAGD).

It belongs to the class-II pyridine nucleotide-disulfide oxidoreductase family. Homodimer. The cofactor is FAD.

Serves to protect the cell against DNA damage by alkyl hydroperoxides. It can use either NADH or NADPH as electron donor for direct reduction of redox dyes or of alkyl hydroperoxides when combined with the AhpC protein. This is Alkyl hydroperoxide reductase subunit F (ahpF) from Staphylococcus epidermidis (strain ATCC 12228 / FDA PCI 1200).